The chain runs to 319 residues: Cytochrome c biogenesis protein CcsA (319 aa).

8 helical membrane-spanning segments follow: residues 9–29 (ILTHISFSIISIVITIFLISL), 48–68 (TFFCITGLLVTRWIYSGHFPL), 71–91 (LYESLIFLSWSFSVIHMVPYF), 98–118 (LSTITAPSTIFTQGFATSGLL), 143–163 (MILGYAALLCGSLLSVALLVI), 225–245 (IISLGFLFLTIGILSGAVWAN), 258–275 (ETWAFITWTLFAIYLHTR), and 286–306 (AIVASIGFLIIWICYFGVNLL).

Belongs to the CcmF/CycK/Ccl1/NrfE/CcsA family. As to quaternary structure, may interact with Ccs1.

The protein localises to the plastid. It is found in the chloroplast thylakoid membrane. Required during biogenesis of c-type cytochromes (cytochrome c6 and cytochrome f) at the step of heme attachment. This is Cytochrome c biogenesis protein CcsA from Eucalyptus globulus subsp. globulus (Tasmanian blue gum).